The following is a 95-amino-acid chain: Co-chaperonin GroES (95 aa).

It belongs to the GroES chaperonin family. As to quaternary structure, heptamer of 7 subunits arranged in a ring. Interacts with the chaperonin GroEL.

It is found in the cytoplasm. Functionally, together with the chaperonin GroEL, plays an essential role in assisting protein folding. The GroEL-GroES system forms a nano-cage that allows encapsulation of the non-native substrate proteins and provides a physical environment optimized to promote and accelerate protein folding. GroES binds to the apical surface of the GroEL ring, thereby capping the opening of the GroEL channel. In Deinococcus radiodurans (strain ATCC 13939 / DSM 20539 / JCM 16871 / CCUG 27074 / LMG 4051 / NBRC 15346 / NCIMB 9279 / VKM B-1422 / R1), this protein is Co-chaperonin GroES.